The sequence spans 389 residues: Teichoic acid ribitol-phosphate primase (389 aa).

It belongs to the CDP-glycerol glycerophosphotransferase family.

It localises to the cell membrane. The catalysed reaction is 4-O-[(2R)-glycerylphospho]-N-acetyl-beta-D-mannosaminyl-(1-&gt;4)-N-acetyl-alpha-D-glucosaminyl di-trans,octa-cis-undecaprenyl diphosphate + CDP-L-ribitol = 4-O-[1-D-ribitylphospho-(2R)-1-glycerylphospho]-N-acetyl-beta-D-mannosaminyl-(1-&gt;4)-N-acetyl-alpha-D-glucosaminyl di-trans,octa-cis-undecaprenyl diphosphate + CMP + H(+). The protein operates within cell wall biogenesis; poly(ribitol phosphate) teichoic acid biosynthesis. Functionally, catalyzes the addition of a single ribitol phosphate unit onto the glycerol phosphate of the linkage unit, as a primer for polymerisation by TarL. The sequence is that of Teichoic acid ribitol-phosphate primase (tarK) from Bacillus spizizenii (strain ATCC 23059 / NRRL B-14472 / W23) (Bacillus subtilis subsp. spizizenii).